Reading from the N-terminus, the 358-residue chain is NADH-quinone oxidoreductase subunit H (358 aa).

8 helical membrane-spanning segments follow: residues 20–40, 95–115, 128–148, 168–188, 206–226, 253–273, 295–315, and 334–354; these read ITVG…IPLI, ALFY…WAVI, IGLL…IIAG, ISYE…SGSM, VFSW…ISAV, GFAF…IAAL, TPSA…YLWI, and VLIP…ISPL.

The protein belongs to the complex I subunit 1 family. As to quaternary structure, NDH-1 is composed of 14 different subunits. Subunits NuoA, H, J, K, L, M, N constitute the membrane sector of the complex.

It is found in the cell inner membrane. It carries out the reaction a quinone + NADH + 5 H(+)(in) = a quinol + NAD(+) + 4 H(+)(out). NDH-1 shuttles electrons from NADH, via FMN and iron-sulfur (Fe-S) centers, to quinones in the respiratory chain. The immediate electron acceptor for the enzyme in this species is believed to be ubiquinone. Couples the redox reaction to proton translocation (for every two electrons transferred, four hydrogen ions are translocated across the cytoplasmic membrane), and thus conserves the redox energy in a proton gradient. This subunit may bind ubiquinone. The protein is NADH-quinone oxidoreductase subunit H of Neisseria gonorrhoeae (strain ATCC 700825 / FA 1090).